A 336-amino-acid chain; its full sequence is MASRSQNRRPAQEVDNTISYVQCDGLAAMKMVKHCHEESLSNMEVAQGALLGLVVDDRLEITNCFPFPKSSDETIDEEEYQLNMMRRLRLVNVDHFHVGWYQSADVGNFLSLPLLESQYHYQTSIEESVVVIYDTQKSKRGFLTLKAYRLTPQAIAMYKEGEFTPEALRNLKVGYENLFLEVPIVIKNSALCNIMMSELAEMVPEEEGTHFLDLGTASVLENHLRSMMDRVDELNQEANKFNKYQQTVIRQEQDKHRMLAKHAQENAARIAKGETAIPDDEITKLFRPPTVPPRLNPLIVSGQINTYAKHISQFCSQSLAKLYMTQALQGAKENKQ.

One can recognise an MPN domain in the interval Val-21–Ala-154.

The protein belongs to the eIF-3 subunit H family. In terms of assembly, component of the eukaryotic translation initiation factor 3 (eIF-3) complex.

It is found in the cytoplasm. In terms of biological role, component of the eukaryotic translation initiation factor 3 (eIF-3) complex, which is involved in protein synthesis of a specialized repertoire of mRNAs and, together with other initiation factors, stimulates binding of mRNA and methionyl-tRNAi to the 40S ribosome. The eIF-3 complex specifically targets and initiates translation of a subset of mRNAs involved in cell proliferation. This is Eukaryotic translation initiation factor 3 subunit H from Culex quinquefasciatus (Southern house mosquito).